The chain runs to 61 residues: Photosystem II reaction center protein K (61 aa).

The propeptide occupies 1-24 (MINIFSFICIYLHSALYSSSFFFG). Residues 40 to 60 (MPVIPLFFFLLAFVWQAAVSF) traverse the membrane as a helical segment.

The protein belongs to the PsbK family. PSII is composed of 1 copy each of membrane proteins PsbA, PsbB, PsbC, PsbD, PsbE, PsbF, PsbH, PsbI, PsbJ, PsbK, PsbL, PsbM, PsbT, PsbX, PsbY, PsbZ, Psb30/Ycf12, at least 3 peripheral proteins of the oxygen-evolving complex and a large number of cofactors. It forms dimeric complexes.

It localises to the plastid. Its subcellular location is the chloroplast thylakoid membrane. Functionally, one of the components of the core complex of photosystem II (PSII). PSII is a light-driven water:plastoquinone oxidoreductase that uses light energy to abstract electrons from H(2)O, generating O(2) and a proton gradient subsequently used for ATP formation. It consists of a core antenna complex that captures photons, and an electron transfer chain that converts photonic excitation into a charge separation. The chain is Photosystem II reaction center protein K from Pelargonium hortorum (Common geranium).